The primary structure comprises 193 residues: Interleukin-18 (193 aa).

The propeptide occupies 1 to 36 (MAAEQVEDNCISFVEMKFINNTLYFVAENDEDLESD).

It belongs to the IL-1 family. Forms a ternary complex with ligand-binding receptor subunit IL18R1 and signaling receptor subunit IL18RAP at the plasma membrane. Mature IL18 first binds to IL18R1 forming a low affinity binary complex, which then interacts with IL18RAP to form a high affinity ternary complex that signals inside the cell. Interacts with cargo receptor TMED10; the interaction mediates the translocation from the cytoplasm into the ERGIC (endoplasmic reticulum-Golgi intermediate compartment) and thereby secretion. The pro-IL-18 precursor is processed by CASP1, CASP4 or CASP5 to yield its mature, active form. The pro-IL-18 precursor features autoinhibitory interactions between the propeptide and the post-cleavage-site region, preventing recognition by the IL18R1 receptor. Processing by CASP1, CASP4 or CASP5 induces conformational changes to generate critical receptor-binding sites. The mature form is then secreted and released in the extracellular milieu by passing through the gasdermin-D (GSDMD) pore. In contrast, cleavage by CASP3 inactivates IL18.

The protein localises to the cytoplasm. It localises to the cytosol. It is found in the secreted. Its function is as follows. Pro-inflammatory cytokine primarily involved in epithelial barrier repair, polarized T-helper 1 (Th1) cell and natural killer (NK) cell immune responses. Upon binding to IL18R1 and IL18RAP, forms a signaling ternary complex which activates NF-kappa-B, triggering synthesis of inflammatory mediators. Synergizes with IL12/interleukin-12 to induce IFNG synthesis from T-helper 1 (Th1) cells and natural killer (NK) cells. Involved in transduction of inflammation downstream of pyroptosis: its mature form is specifically released in the extracellular milieu by passing through the gasdermin-D (GSDMD) pore. The chain is Interleukin-18 (IL18) from Boselaphus tragocamelus (Nilgai).